We begin with the raw amino-acid sequence, 312 residues long: Pyridoxal kinase (312 aa).

M1 carries the post-translational modification N-acetylmethionine. S12 and T47 together coordinate pyridoxal. T47 contributes to the pyridoxal 5'-phosphate binding site. S59 bears the Phosphoserine mark. Position 113 (D113) interacts with ATP. D113 is a Na(+) binding site. D118 serves as a coordination point for Mg(2+). Na(+) is bound at residue T148. 150–153 (NQFE) contributes to the ATP binding site. S164 is subject to Phosphoserine. T186 serves as a coordination point for Na(+). 186-187 (TS) contacts ATP. At S213 the chain carries Phosphoserine. Residues 226-228 (VEA) and T233 each bind ATP. Residue 234–235 (GD) participates in pyridoxal 5'-phosphate binding. D235 functions as the Proton acceptor in the catalytic mechanism. S285 is modified (phosphoserine).

The protein belongs to the pyridoxine kinase family. In terms of assembly, homodimer. It depends on Zn(2+) as a cofactor. Requires Mg(2+) as cofactor.

The protein localises to the cytoplasm. It is found in the cytosol. It catalyses the reaction pyridoxal + ATP = pyridoxal 5'-phosphate + ADP + H(+). It carries out the reaction pyridoxamine + ATP = pyridoxamine 5'-phosphate + ADP + H(+). The catalysed reaction is pyridoxine + ATP = pyridoxine 5'-phosphate + ADP + H(+). Its pathway is cofactor metabolism; pyridoxal 5'-phosphate salvage; pyridoxal 5'-phosphate from pyridoxal: step 1/1. The protein operates within cofactor metabolism; pyridoxal 5'-phosphate salvage; pyridoxine 5'-phosphate from pyridoxine: step 1/1. It participates in cofactor metabolism; pyridoxal 5'-phosphate salvage; pyridoxamine 5'-phosphate from pyridoxamine: step 1/1. Its activity is regulated as follows. Activity is increased in the presence of K(+)or Na(+). In terms of biological role, catalyzes the phosphorylation of the dietary vitamin B6 vitamers pyridoxal (PL), pyridoxine (PN) and pyridoxamine (PM) to form pyridoxal 5'-phosphate (PLP), pyridoxine 5'-phosphate (PNP) and pyridoxamine 5'-phosphate (PMP), respectively. PLP is the active form of vitamin B6, and acts as a cofactor for over 140 different enzymatic reactions. This Mus musculus (Mouse) protein is Pyridoxal kinase.